A 173-amino-acid chain; its full sequence is Translation initiation factor IF-3 (173 aa).

Belongs to the IF-3 family. As to quaternary structure, monomer.

The protein resides in the cytoplasm. In terms of biological role, IF-3 binds to the 30S ribosomal subunit and shifts the equilibrium between 70S ribosomes and their 50S and 30S subunits in favor of the free subunits, thus enhancing the availability of 30S subunits on which protein synthesis initiation begins. The chain is Translation initiation factor IF-3 from Neisseria gonorrhoeae (strain ATCC 700825 / FA 1090).